A 971-amino-acid chain; its full sequence is Dynamin-like GTPase OPA1, mitochondrial (971 aa).

The N-terminal 89 residues, 1 to 89 (MLRVGRAVAC…GGWRYQQHRS (89 aa)), are a transit peptide targeting the mitochondrion. At 90 to 98 (FWMLRLASR) the chain is on the mitochondrial matrix side. The helical transmembrane segment at 99 to 115 (LLKLRYIVLGSAVGGGY) threads the bilayer. The Mitochondrial intermembrane portion of the chain corresponds to 116 to 781 (TAKKTYEEWK…SVINDMVGPD (666 aa)). Residues 204–224 (EAPVTATPEASDKQFKKSSDK) are disordered. The segment covering 213–224 (ASDKQFKKSSDK) has biased composition (basic and acidic residues). A coiled-coil region spans residues 219-265 (KKSSDKEKVDQLQEELLRTQMKYQRMLERLEKENKDLRKVVLQKDEK). The 276-residue stretch at 297–572 (QDHLPRVVVV…FWKMVRESVE (276 aa)) folds into the Dynamin-type G domain. A G1 motif region spans residues 307-314 (GDQSAGKT). Ser-310, Gly-312, Lys-313, Thr-314, Ser-315, and Gly-329 together coordinate GTP. Thr-314 is a binding site for Mg(2+). Residues 333–336 (MMTR) are G2 motif. Residues Thr-335 and Asp-410 each coordinate Mg(2+). Positions 410-413 (DLPG) are G3 motif. The tract at residues 478 to 481 (TKVD) is G4 motif. 3 residues coordinate GTP: Lys-479, Asp-481, and Thr-514. The interval 512–515 (VVTG) is G5 motif. Stalk region regions lie at residues 600–847 (DRNE…IKDT) and 885–939 (CNDV…VHLI). The paddle region stretch occupies residues 747–867 (TDKPQWDAAI…QKALQHCNLC (121 aa)). An intramembrane segment occupies 782 to 792 (WKQRWMSWKNR). Residues 793-971 (SPEQHTRNET…AFIEALHKEK (179 aa)) lie on the Mitochondrial intermembrane side of the membrane. Cys-867 and Cys-885 are oxidised to a cystine. A coiled-coil region spans residues 906–971 (RQQLTNTEVR…AFIEALHKEK (66 aa)).

The protein belongs to the TRAFAC class dynamin-like GTPase superfamily. Dynamin/Fzo/YdjA family. Oligomeric complex consisting of membrane-bound and soluble forms of OPA1. In terms of processing, cleaved by OMA1 or YME1L downstream of the transmembrane region in response to different signals to generate soluble forms. Cleaved by OMA1 at position S1 following stress conditions, generating the short soluble form (Dynamin-like GTPase OPA1, short form; S-OPA1). In terms of tissue distribution, strongly expressed in the brain, ovary and skeletal muscle. In the brain, expression of the mRNA was observed specifically in motor neurons, in nucleus oculomotorius, in nucleus valvulae lateralis, in the medulla oblongata and in the spinal cord.

It localises to the mitochondrion inner membrane. It is found in the mitochondrion intermembrane space. It catalyses the reaction GTP + H2O = GDP + phosphate + H(+). Functionally, dynamin-related GTPase that is essential for normal mitochondrial morphology by mediating fusion of the mitochondrial inner membranes, regulating cristae morphology and maintaining respiratory chain function. Exists in two forms: the transmembrane, long form (Dynamin-like GTPase OPA1, long form; L-OPA1), which is tethered to the inner mitochondrial membrane, and the short soluble form (Dynamin-like GTPase OPA1, short form; S-OPA1), which results from proteolytic cleavage and localizes in the intermembrane space. Both forms (L-OPA1 and S-OPA1) cooperate to catalyze the fusion of the mitochondrial inner membrane. The equilibrium between L-OPA1 and S-OPA1 is essential: excess levels of S-OPA1, produced by cleavage by OMA1 following loss of mitochondrial membrane potential, lead to an impaired equilibrium between L-OPA1 and S-OPA1, inhibiting mitochondrial fusion. The balance between L-OPA1 and S-OPA1 also influences cristae shape and morphology. Its role in mitochondrial morphology is required for mitochondrial genome maintenance. Constitutes the transmembrane long form (L-OPA1) that plays a central role in mitochondrial inner membrane fusion and cristae morphology. L-OPA1 and the soluble short form (S-OPA1) form higher-order helical assemblies that coordinate the fusion of mitochondrial inner membranes. Inner membrane-anchored L-OPA1 molecules initiate membrane remodeling by recruiting soluble S-OPA1 to rapidly polymerize into a flexible cylindrical scaffold encaging the mitochondrial inner membrane. Once at the membrane surface, the formation of S-OPA1 helices induce bilayer curvature. OPA1 dimerization through the paddle region, which inserts into cardiolipin-containing membrane, promotes GTP hydrolysis and the helical assembly of a flexible OPA1 lattice on the membrane, which drives membrane curvature and mitochondrial fusion. Plays a role in the maintenance and remodeling of mitochondrial cristae, some invaginations of the mitochondrial inner membrane that provide an increase in the surface area. Probably acts by forming helical filaments at the inside of inner membrane tubes with the shape and dimensions of crista junctions. Its function is as follows. Constitutes the soluble short form (S-OPA1) generated by cleavage by OMA1, which plays a central role in mitochondrial inner membrane fusion and cristae morphology. The transmembrane long form (L-OPA1) and the S-OPA1 form higher-order helical assemblies that coordinate the fusion of mitochondrial inner membranes. Inner membrane-anchored L-OPA1 molecules initiate membrane remodeling by recruiting soluble S-OPA1 to rapidly polymerize into a flexible cylindrical scaffold encaging the mitochondrial inner membrane. Once at the membrane surface, the formation of S-OPA1 helices induce bilayer curvature. OPA1 dimerization through the paddle region, which inserts into cardiolipin-containing membrane, promotes GTP hydrolysis and the helical assembly of a flexible OPA1 lattice on the membrane, which drives membrane curvature and mitochondrial fusion. Excess levels of S-OPA1 produced by cleavage by OMA1 following stress conditions that induce loss of mitochondrial membrane potential, lead to an impaired equilibrium between L-OPA1 and S-OPA1, thereby inhibiting mitochondrial fusion. Plays a role in the maintenance and remodeling of mitochondrial cristae, some invaginations of the mitochondrial inner membrane that provide an increase in the surface area. Probably acts by forming helical filaments at the inside of inner membrane tubes with the shape and dimensions of crista junctions. The sequence is that of Dynamin-like GTPase OPA1, mitochondrial (opa1) from Oncorhynchus masou (Cherry salmon).